The chain runs to 675 residues: Pesticidal crystal protein Cry25Aa (675 aa).

This sequence belongs to the delta endotoxin family.

Its function is as follows. Promotes colloidosmotic lysis by binding to the midgut epithelial cells of insects. The protein is Pesticidal crystal protein Cry25Aa (cry25Aa) of Bacillus thuringiensis subsp. jegathesan.